Here is a 147-residue protein sequence, read N- to C-terminus: Acidic phospholipase A2 S3-24 (147 aa).

Positions 1–19 (MYPAHLLVLLAVCVSLLGA) are cleaved as a signal peptide. The propeptide occupies 20-27 (SDMPPQPL). 7 disulfides stabilise this stretch: Cys38-Cys99, Cys54-Cys146, Cys56-Cys72, Cys71-Cys127, Cys78-Cys120, Cys88-Cys113, and Cys106-Cys118. Ca(2+) contacts are provided by Tyr55, Gly57, and Gly59. His75 is a catalytic residue. Asp76 is a Ca(2+) binding site. Residue Asp121 is part of the active site.

The protein belongs to the phospholipase A2 family. Group I subfamily. D49 sub-subfamily. It depends on Ca(2+) as a cofactor. Expressed by the venom gland.

It localises to the secreted. It catalyses the reaction a 1,2-diacyl-sn-glycero-3-phosphocholine + H2O = a 1-acyl-sn-glycero-3-phosphocholine + a fatty acid + H(+). In terms of biological role, snake venom phospholipase A2 (PLA2) that inhibits collagen-induced platelet aggregation. PLA2 catalyzes the calcium-dependent hydrolysis of the 2-acyl groups in 3-sn-phosphoglycerides. In Austrelaps superbus (Lowland copperhead snake), this protein is Acidic phospholipase A2 S3-24.